Reading from the N-terminus, the 128-residue chain is 3-aminoacrylate deaminase RutC (128 aa).

The protein belongs to the RutC family. In terms of assembly, homotrimer.

The catalysed reaction is (Z)-3-aminoacrylate + H2O + H(+) = 3-oxopropanoate + NH4(+). Its function is as follows. Involved in pyrimidine catabolism. Catalyzes the deamination of 3-aminoacrylate to malonic semialdehyde, a reaction that can also occur spontaneously. RutC may facilitate the reaction and modulate the metabolic fitness, rather than catalyzing essential functions. The polypeptide is 3-aminoacrylate deaminase RutC (Escherichia coli O157:H7).